The primary structure comprises 350 residues: Dihydroorotase (350 aa).

2 residues coordinate Zn(2+): H17 and H19. Residues 19 to 21 (HLR) and N45 each bind substrate. The Zn(2+) site is built by K103, H140, and H178. At K103 the chain carries N6-carboxylysine. H140 lines the substrate pocket. L224 contacts substrate. D252 lines the Zn(2+) pocket. D252 is an active-site residue. Positions 256 and 268 each coordinate substrate.

It belongs to the metallo-dependent hydrolases superfamily. DHOase family. Class II DHOase subfamily. Homodimer. Zn(2+) serves as cofactor.

The enzyme catalyses (S)-dihydroorotate + H2O = N-carbamoyl-L-aspartate + H(+). The protein operates within pyrimidine metabolism; UMP biosynthesis via de novo pathway; (S)-dihydroorotate from bicarbonate: step 3/3. In terms of biological role, catalyzes the reversible cyclization of carbamoyl aspartate to dihydroorotate. The protein is Dihydroorotase of Buchnera aphidicola subsp. Acyrthosiphon pisum (strain 5A).